A 190-amino-acid chain; its full sequence is Peptidyl-tRNA hydrolase (190 aa).

Position 18 (tyrosine 18) interacts with tRNA. Histidine 23 acts as the Proton acceptor in catalysis. Positions 67, 69, and 115 each coordinate tRNA.

This sequence belongs to the PTH family. Monomer.

It is found in the cytoplasm. It catalyses the reaction an N-acyl-L-alpha-aminoacyl-tRNA + H2O = an N-acyl-L-amino acid + a tRNA + H(+). Hydrolyzes ribosome-free peptidyl-tRNAs (with 1 or more amino acids incorporated), which drop off the ribosome during protein synthesis, or as a result of ribosome stalling. In terms of biological role, catalyzes the release of premature peptidyl moieties from peptidyl-tRNA molecules trapped in stalled 50S ribosomal subunits, and thus maintains levels of free tRNAs and 50S ribosomes. The chain is Peptidyl-tRNA hydrolase from Leptospira interrogans serogroup Icterohaemorrhagiae serovar Lai (strain 56601).